A 256-amino-acid polypeptide reads, in one-letter code: Sugar fermentation stimulation protein homolog (256 aa).

Residues T128–T141 are compositionally biased toward low complexity. The interval T128–K149 is disordered.

This sequence belongs to the SfsA family.

This chain is Sugar fermentation stimulation protein homolog, found in Shewanella sediminis (strain HAW-EB3).